Consider the following 533-residue polypeptide: Aspartic proteinase sxa1 (533 aa).

The signal sequence occupies residues 1 to 23 (MKASFFVFAISALQALQASVASA). A Peptidase A1 domain is found at 76–434 (YFANLTLGSN…DWDAQKIGLA (359 aa)). N-linked (GlcNAc...) asparagine glycosylation occurs at N79. D94 is an active-site residue. N-linked (GlcNAc...) asparagine glycosylation is found at N106, N138, N153, N166, N271, N278, N299, and N319. D325 is a catalytic residue. N439 carries an N-linked (GlcNAc...) asparagine glycan.

This sequence belongs to the peptidase A1 family.

Its function is as follows. Involved in degradation or processing of the mating pheromones. Its loss may cause a persistent response to the pheromones. It may cleave the mating pheromone M-factor. May be involved in processing of zymogens that are required for zygote formation. This Schizosaccharomyces pombe (strain 972 / ATCC 24843) (Fission yeast) protein is Aspartic proteinase sxa1 (sxa1).